The sequence spans 447 residues: Na(+)-translocating NADH-quinone reductase subunit A (447 aa).

The protein belongs to the NqrA family. In terms of assembly, composed of six subunits; NqrA, NqrB, NqrC, NqrD, NqrE and NqrF.

It carries out the reaction a ubiquinone + n Na(+)(in) + NADH + H(+) = a ubiquinol + n Na(+)(out) + NAD(+). In terms of biological role, NQR complex catalyzes the reduction of ubiquinone-1 to ubiquinol by two successive reactions, coupled with the transport of Na(+) ions from the cytoplasm to the periplasm. NqrA to NqrE are probably involved in the second step, the conversion of ubisemiquinone to ubiquinol. The sequence is that of Na(+)-translocating NADH-quinone reductase subunit A from Neisseria gonorrhoeae (strain ATCC 700825 / FA 1090).